Consider the following 398-residue polypeptide: MAQRQPHSPNQTLISITNDTESSSVVSNDNTNKGRSGDNSPGIEALCAIYITYAVIISVGILGNAILIKVFFKTKSMQTVPNIFITSLAFGDLLLLLTCVPVDATHYLAEGWLFGRIGCKVLSFIRLTSVGVSVFTLTILSADRYKAVVKPLERQPSNAILKTCIKAGCVWIVSMIFALPEAIFSNVYSFRDPNKNVTFESCTSYPVSKKLLQEIHSLLCFLVFYIIPLSIISVYYSLIARTLYKSTLNIPTEEQGHARKQIESRKRIARTVLVLVALFALCWLPNHLLYLYHSFTSQTYVDPSAMHFIFTIFSRVLAFSNSCVNPFALYWLSKTFQKHFKAQLFCCKAEQPEPPVADTSLTTLAVMGRVPGTGNMQMSEISVTSFPGCSVKQAEDRV.

The Extracellular segment spans residues 1–40 (MAQRQPHSPNQTLISITNDTESSSVVSNDNTNKGRSGDNS). 2 N-linked (GlcNAc...) asparagine glycosylation sites follow: N10 and N18. Residues 41–62 (PGIEALCAIYITYAVIISVGIL) traverse the membrane as a helical segment. The Cytoplasmic segment spans residues 63-81 (GNAILIKVFFKTKSMQTVP). The chain crosses the membrane as a helical span at residues 82–102 (NIFITSLAFGDLLLLLTCVPV). Residues 103–120 (DATHYLAEGWLFGRIGCK) lie on the Extracellular side of the membrane. A disulfide bond links C119 and C202. A helical membrane pass occupies residues 121-142 (VLSFIRLTSVGVSVFTLTILSA). Topologically, residues 143–162 (DRYKAVVKPLERQPSNAILK) are cytoplasmic. A helical membrane pass occupies residues 163–183 (TCIKAGCVWIVSMIFALPEAI). At 184–219 (FSNVYSFRDPNKNVTFESCTSYPVSKKLLQEIHSLL) the chain is on the extracellular side. A helical membrane pass occupies residues 220 to 240 (CFLVFYIIPLSIISVYYSLIA). The Cytoplasmic segment spans residues 241–271 (RTLYKSTLNIPTEEQGHARKQIESRKRIART). Residues 272–292 (VLVLVALFALCWLPNHLLYLY) form a helical membrane-spanning segment. Residues 293 to 312 (HSFTSQTYVDPSAMHFIFTI) are Extracellular-facing. A helical transmembrane segment spans residues 313–332 (FSRVLAFSNSCVNPFALYWL). The Cytoplasmic segment spans residues 333-398 (SKTFQKHFKA…CSVKQAEDRV (66 aa)). C346 carries S-palmitoyl cysteine lipidation.

This sequence belongs to the G-protein coupled receptor 1 family. Interacts with C6orf89.

The protein localises to the cell membrane. Functionally, role in sperm cell division, maturation, or function. This receptor mediates its action by association with G proteins that activate a phosphatidylinositol-calcium second messenger system. The sequence is that of Bombesin receptor subtype-3 (BRS3) from Macaca mulatta (Rhesus macaque).